A 157-amino-acid chain; its full sequence is Increased recombination centers protein 23 (157 aa).

The Cytoplasmic portion of the chain corresponds to 1-6 (MIEALE). Residues 7–29 (IVLLLVIQSLQYICRTCIAFLLI) traverse the membrane as a helical segment. At 30 to 33 (PFLG) the chain is on the lumenal side. Residues 34-56 (LYAFDLFLYVYRMILYLSQMFNY) traverse the membrane as a helical segment. The Cytoplasmic portion of the chain corresponds to 57-157 (KRKLGRSKTN…EEGYYIAGSI (101 aa)).

The protein localises to the endoplasmic reticulum membrane. In terms of biological role, is probably involved in a pathway contributing to genomic integrity. This Saccharomyces cerevisiae (strain ATCC 204508 / S288c) (Baker's yeast) protein is Increased recombination centers protein 23 (IRC23).